The sequence spans 165 residues: Growth arrest and DNA damage-inducible protein GADD45 alpha (165 aa).

T2 carries the phosphothreonine modification.

The protein belongs to the GADD45 family. Interacts with AURKA, PCNA, GADD45GIP1 and MAPK14.

It localises to the nucleus. Functionally, might affect PCNA interaction with some CDK (cell division protein kinase) complexes; stimulates DNA excision repair in vitro and inhibits entry of cells into S phase. In T-cells, functions as a regulator of p38 MAPKs by inhibiting p88 phosphorylation and activity. This Rattus norvegicus (Rat) protein is Growth arrest and DNA damage-inducible protein GADD45 alpha (Gadd45a).